The sequence spans 420 residues: Glutamyl-tRNA reductase (420 aa).

Substrate is bound by residues 49-52 (TCNR), Ser-109, 114-116 (EPQ), and Gln-120. Residue Cys-50 is the Nucleophile of the active site. 189–194 (GAGETI) contributes to the NADP(+) binding site.

Belongs to the glutamyl-tRNA reductase family. As to quaternary structure, homodimer.

The catalysed reaction is (S)-4-amino-5-oxopentanoate + tRNA(Glu) + NADP(+) = L-glutamyl-tRNA(Glu) + NADPH + H(+). It participates in porphyrin-containing compound metabolism; protoporphyrin-IX biosynthesis; 5-aminolevulinate from L-glutamyl-tRNA(Glu): step 1/2. Its function is as follows. Catalyzes the NADPH-dependent reduction of glutamyl-tRNA(Glu) to glutamate 1-semialdehyde (GSA). This Edwardsiella ictaluri (strain 93-146) protein is Glutamyl-tRNA reductase.